The chain runs to 513 residues: ATP synthase subunit alpha 2 (513 aa).

169-176 (GDRQTGKT) is an ATP binding site.

It belongs to the ATPase alpha/beta chains family. As to quaternary structure, F-type ATPases have 2 components, CF(1) - the catalytic core - and CF(0) - the membrane proton channel. CF(1) has five subunits: alpha(3), beta(3), gamma(1), delta(1), epsilon(1). CF(0) has three main subunits: a(1), b(2) and c(9-12). The alpha and beta chains form an alternating ring which encloses part of the gamma chain. CF(1) is attached to CF(0) by a central stalk formed by the gamma and epsilon chains, while a peripheral stalk is formed by the delta and b chains.

Its subcellular location is the cell inner membrane. The enzyme catalyses ATP + H2O + 4 H(+)(in) = ADP + phosphate + 5 H(+)(out). Produces ATP from ADP in the presence of a proton gradient across the membrane. The alpha chain is a regulatory subunit. This Photobacterium profundum (strain SS9) protein is ATP synthase subunit alpha 2.